Here is a 385-residue protein sequence, read N- to C-terminus: Trichodiene synthase (385 aa).

The protein belongs to the trichodiene synthase family.

It catalyses the reaction (2E,6E)-farnesyl diphosphate = trichodiene + diphosphate. It participates in sesquiterpene biosynthesis; trichothecene biosynthesis. TS is a member of the terpene cyclase group of enzymes. It catalyzes the isomerization and cyclization of farnesyl pyro-phosphate to form trichodiene, the first cyclic intermediate in the biosynthetic pathway for trichothecenes. It serves to branch trichothecene biosynthesis from the isoprenoid pathway. In Paramyrothecium roridum (Myrothecium leaf spot fungus), this protein is Trichodiene synthase (TRI5).